Here is a 593-residue protein sequence, read N- to C-terminus: Tyrosine-protein phosphatase non-receptor type 11 (593 aa).

The residue at position 2 (Thr2) is an N-acetylthreonine. 2 consecutive SH2 domains span residues 6-102 and 112-216; these read WFHP…KYPL and WFHG…KQPL. Phosphotyrosine is present on residues Tyr62 and Tyr66. The region spanning 247 to 517 is the Tyrosine-protein phosphatase domain; the sequence is FWEEFETLQQ…EAQYRFIYMA (271 aa). Substrate-binding positions include Asp425, 459–465, and Gln506; that span reads CSAGIGR. The active-site Phosphocysteine intermediate is the Cys459. Phosphotyrosine; by PDGFR occurs at positions 542 and 580.

The protein belongs to the protein-tyrosine phosphatase family. Non-receptor class 2 subfamily. In terms of assembly, interacts with phosphorylated SIT1, LIME1, BCAR3 and MZPL1. Interacts with FCRL4, FCRL6, ANKHD1, SHB, INPP5D/SHIP1 and CD84. Interacts with MILR1 (tyrosine-phosphorylated). Interacts with FLT1 (tyrosine-phosphorylated), FLT3 (tyrosine-phosphorylated), FLT4 (tyrosine-phosphorylated), KIT and GRB2. Interacts with PTPNS1. Interacts with KIR2DL1; the interaction is enhanced by ARRB2. Interacts (via SH2 domain) with TEK/TIE2 (tyrosine phosphorylated). Interacts with GAB2. Interacts with TERT; the interaction retains TERT in the nucleus. Interacts with PECAM1 and FER. Interacts with EPHA2 (activated); participates in PTK2/FAK1 dephosphorylation in EPHA2 downstream signaling. Interacts with PDGFRA (tyrosine phosphorylated). Interacts with PDGFRB (tyrosine phosphorylated); this interaction increases the PTPN11 phosphatase activity. Interacts with ROS1; this mediates PTPN11 phosphorylation. Interacts with CEACAM1 (via cytoplasmic domain); this interaction depends on the monomer/dimer equilibrium and is phosphorylation-dependent. Interacts with MPIG6B (via ITIM motif). Interacts with SIGLEC10. Interacts with CLEC12B (via ITIM motif); this interaction triggers dephosphorylation and activation of PTPN11. Interacts (via SH2 domains) with NEDD9/CAS-L; the interaction is enhanced when NEDD9/CAS-L is tyrosine phosphorylated. Phosphorylated on Tyr-542 and Tyr-580 upon receptor protein tyrosine kinase activation; which creates a binding site for GRB2 and other SH2-containing proteins. Phosphorylated upon activation of the receptor-type kinase FLT3. Phosphorylated upon activation of the receptor-type kinase PDGFRA. Phosphorylated by activated PDGFRB. In terms of tissue distribution, expressed in brain, muscle and lung.

It is found in the cytoplasm. The enzyme catalyses O-phospho-L-tyrosyl-[protein] + H2O = L-tyrosyl-[protein] + phosphate. With respect to regulation, inhibited by orthovanadate, molybdate and spermidine. Functionally, acts downstream of various receptor and cytoplasmic protein tyrosine kinases to participate in the signal transduction from the cell surface to the nucleus. Positively regulates MAPK signal transduction pathway. Dephosphorylates GAB1, ARHGAP35 and EGFR. Dephosphorylates ROCK2 at 'Tyr-722' resulting in stimulation of its RhoA binding activity. Dephosphorylates CDC73. Dephosphorylates SOX9 on tyrosine residues, leading to inactivate SOX9 and promote ossification. Dephosphorylates tyrosine-phosphorylated NEDD9/CAS-L. This chain is Tyrosine-protein phosphatase non-receptor type 11 (Ptpn11), found in Rattus norvegicus (Rat).